A 220-amino-acid chain; its full sequence is ATP phosphoribosyltransferase (220 aa).

Belongs to the ATP phosphoribosyltransferase family. Short subfamily. As to quaternary structure, heteromultimer composed of HisG and HisZ subunits.

It localises to the cytoplasm. The catalysed reaction is 1-(5-phospho-beta-D-ribosyl)-ATP + diphosphate = 5-phospho-alpha-D-ribose 1-diphosphate + ATP. It functions in the pathway amino-acid biosynthesis; L-histidine biosynthesis; L-histidine from 5-phospho-alpha-D-ribose 1-diphosphate: step 1/9. Catalyzes the condensation of ATP and 5-phosphoribose 1-diphosphate to form N'-(5'-phosphoribosyl)-ATP (PR-ATP). Has a crucial role in the pathway because the rate of histidine biosynthesis seems to be controlled primarily by regulation of HisG enzymatic activity. The polypeptide is ATP phosphoribosyltransferase (Anaeromyxobacter sp. (strain Fw109-5)).